A 476-amino-acid polypeptide reads, in one-letter code: Aspartyl/glutamyl-tRNA(Asn/Gln) amidotransferase subunit B (476 aa).

This sequence belongs to the GatB/GatE family. GatB subfamily. Heterotrimer of A, B and C subunits.

The catalysed reaction is L-glutamyl-tRNA(Gln) + L-glutamine + ATP + H2O = L-glutaminyl-tRNA(Gln) + L-glutamate + ADP + phosphate + H(+). The enzyme catalyses L-aspartyl-tRNA(Asn) + L-glutamine + ATP + H2O = L-asparaginyl-tRNA(Asn) + L-glutamate + ADP + phosphate + 2 H(+). Functionally, allows the formation of correctly charged Asn-tRNA(Asn) or Gln-tRNA(Gln) through the transamidation of misacylated Asp-tRNA(Asn) or Glu-tRNA(Gln) in organisms which lack either or both of asparaginyl-tRNA or glutaminyl-tRNA synthetases. The reaction takes place in the presence of glutamine and ATP through an activated phospho-Asp-tRNA(Asn) or phospho-Glu-tRNA(Gln). In Thermosipho melanesiensis (strain DSM 12029 / CIP 104789 / BI429), this protein is Aspartyl/glutamyl-tRNA(Asn/Gln) amidotransferase subunit B.